The following is a 759-amino-acid chain: Short transient receptor potential channel 1 (759 aa).

The disordered stretch occupies residues methionine 1–glutamate 30. Over methionine 1–lysine 352 the chain is Cytoplasmic. Residues serine 15–proline 28 show a composition bias toward low complexity. 3 ANK repeats span residues leucine 46–leucine 75, leucine 83–methionine 112, and methionine 124–lysine 153. A helical transmembrane segment spans residues phenylalanine 353–valine 373. Residues tyrosine 374–threonine 381 lie on the Extracellular side of the membrane. Residues methionine 382–tryptophan 402 traverse the membrane as a helical segment. Residues serine 403–threonine 461 lie on the Cytoplasmic side of the membrane. The helical transmembrane segment at leucine 462 to methionine 482 threads the bilayer. Residues tyrosine 483–lysine 505 lie on the Extracellular side of the membrane. Residues phenylalanine 506–aspartate 526 form a helical membrane-spanning segment. Topologically, residues lysine 527–serine 552 are cytoplasmic. The helical transmembrane segment at phenylalanine 553–phenylalanine 573 threads the bilayer. Topologically, residues valine 574–glutamate 582 are extracellular. The helical transmembrane segment at leucine 583–leucine 603 threads the bilayer. At threonine 604 to asparagine 759 the chain is on the cytoplasmic side.

It belongs to the transient receptor (TC 1.A.4) family. STrpC subfamily. TRPC1 sub-subfamily. Homotetramer and heterotetramer with TRPC4 and/or TRPC5. Interacts with TRPC4 and TRPC5. Interacts with ITPR3. Interacts with MX1 and RNF24. Interacts with FKBP4. Interacts with TRPC4AP. Interacts with PLSCR1. Interacts with PKD2L2. Forms a heterotetramer with PKD2 with a 2:2 stoichiometry; has distinct channel properties separate from PKD2 or TRPC1 homomers alone. Post-translationally, activation of PRKCA induces phosphorylation of TRPC1 and subsequent Ca2+ entry into cells.

The protein localises to the cell membrane. The catalysed reaction is Ca(2+)(in) = Ca(2+)(out). In terms of biological role, forms a receptor-activated non-selective calcium permeant cation channel. Probably is operated by a phosphatidylinositol second messenger system activated by receptor tyrosine kinases or G-protein coupled receptors. Also activated by intracellular calcium store depletion. The protein is Short transient receptor potential channel 1 (TRPC1) of Oryctolagus cuniculus (Rabbit).